Reading from the N-terminus, the 292-residue chain is Lyso-ornithine lipid O-acyltransferase (292 aa).

The helical transmembrane segment at 11 to 31 (GMLLVMVSLVLMPVQILCLWL) threads the bilayer. Positions 258–292 (RLRGRSRSAAKGEPAPACSAAPDIPSDAQRSRLAP) are disordered.

This sequence belongs to the 1-acyl-sn-glycerol-3-phosphate acyltransferase family. OlsA subfamily.

The protein resides in the membrane. It catalyses the reaction a lyso-ornithine lipid + a fatty acyl-[ACP] = an N(2)-[(3R)-3-(acyloxy)acyl]-L-ornithine lipid + holo-[ACP]. It functions in the pathway lipid metabolism. Its function is as follows. Catalyzes the second step in the formation of ornithine lipids, which are phosphorus-free membrane lipids. Uses acyl-acyl carrier protein (acyl-AcpP) as an acyl donor and converts lyso-ornithine lipid (LOL) into ornithine lipid (OL). The sequence is that of Lyso-ornithine lipid O-acyltransferase from Rhizobium meliloti (strain 1021) (Ensifer meliloti).